Consider the following 518-residue polypeptide: Glutamate--cysteine ligase (518 aa).

It belongs to the glutamate--cysteine ligase type 1 family. Type 1 subfamily.

The catalysed reaction is L-cysteine + L-glutamate + ATP = gamma-L-glutamyl-L-cysteine + ADP + phosphate + H(+). It functions in the pathway sulfur metabolism; glutathione biosynthesis; glutathione from L-cysteine and L-glutamate: step 1/2. This is Glutamate--cysteine ligase from Escherichia fergusonii (strain ATCC 35469 / DSM 13698 / CCUG 18766 / IAM 14443 / JCM 21226 / LMG 7866 / NBRC 102419 / NCTC 12128 / CDC 0568-73).